We begin with the raw amino-acid sequence, 336 residues long: Vacuolar protein sorting-associated protein 26B (336 aa).

Residues Ser302, Ser304, and Ser319 each carry the phosphoserine modification.

The protein belongs to the VPS26 family. Component of the heterotrimeric retromer cargo-selective complex (CSC), also described as vacuolar protein sorting subcomplex (VPS), formed by VPS26 (VPS26A or VPS26B), VPS29 and VPS35. The CSC has a highly elongated structure with VPS26 and VPS29 binding independently at opposite distal ends of VPS35 as central platform. The CSC is believed to associate with variable sorting nexins to form functionally distinct retromer complex variants. The originally described SNX-BAR retromer is a pentamer containing the CSC and a heterodimeric membrane-deforming subcomplex formed between SNX1 or SNX2 and SNX5 or SNX6 (also called SNX-BAR subcomplex); the respective CSC and SNX-BAR subcomplexes associate with low affinity. The CSC associates with SNX3 to form a SNX3-retromer complex. The CSC associates with SNX27, the WASH complex and the SNX-BAR subcomplex to form the SNX27-retromer complex. Interacts with VPS29, VPS35, TBC1D5, GOLPH3, SNX27. In terms of tissue distribution, ubiquitously expressed in developing embryo and adult. Highly expressed in brain.

Its subcellular location is the cytoplasm. The protein resides in the membrane. It is found in the early endosome. The protein localises to the late endosome. Its function is as follows. Acts as a component of the retromer cargo-selective complex (CSC). The CSC is believed to be the core functional component of retromer or respective retromer complex variants acting to prevent missorting of selected transmembrane cargo proteins into the lysosomal degradation pathway. The recruitment of the CSC to the endosomal membrane involves RAB7A and SNX3. The SNX-BAR retromer mediates retrograde transport of cargo proteins from endosomes to the trans-Golgi network (TGN) and is involved in endosome-to-plasma membrane transport for cargo protein recycling. The SNX3-retromer mediates the retrograde transport of WLS distinct from the SNX-BAR retromer pathway. The SNX27-retromer is believed to be involved in endosome-to-plasma membrane trafficking and recycling of a broad spectrum of cargo proteins. The CSC seems to act as recruitment hub for other proteins, such as the WASH complex and TBC1D5. May be involved in retrograde transport of SORT1 but not of IGF2R. Acts redundantly with VSP26A in SNX-27 mediated endocytic recycling of SLC2A1/GLUT1. This chain is Vacuolar protein sorting-associated protein 26B (Vps26b), found in Mus musculus (Mouse).